A 204-amino-acid polypeptide reads, in one-letter code: Fruiting body protein SC7 (204 aa).

The signal sequence occupies residues 1-16 (MKLTVILLTAVLAASA). Residues 62 to 185 (LKAHNNERAQ…KTLWYYVCNY (124 aa)) form the SCP domain. N-linked (GlcNAc...) asparagine glycans are attached at residues N80, N118, and N134.

Belongs to the CRISP family.

It is found in the secreted. The protein is Fruiting body protein SC7 (SC7) of Schizophyllum commune (Split gill fungus).